Here is a 617-residue protein sequence, read N- to C-terminus: Arrestin domain-containing protein B (617 aa).

The region spanning 1–109 is the C2 domain; sequence MDNRGLRLFI…ATFGQTDKWL (109 aa). Residues Asp-20, Asp-27, Asp-76, Asp-78, and Asp-84 each contribute to the Ca(2+) site.

This sequence belongs to the arrestin family. Ca(2+) serves as cofactor.

The protein is Arrestin domain-containing protein B (adcB) of Dictyostelium discoideum (Social amoeba).